The primary structure comprises 233 residues: Orotidine 5'-phosphate decarboxylase (233 aa).

Substrate contacts are provided by residues aspartate 12, lysine 34, 61 to 70, threonine 116, arginine 181, glutamine 190, glycine 210, and arginine 211; that span reads DWKLHDIGAT. The Proton donor role is filled by lysine 63.

It belongs to the OMP decarboxylase family. Type 1 subfamily. As to quaternary structure, homodimer.

It carries out the reaction orotidine 5'-phosphate + H(+) = UMP + CO2. It participates in pyrimidine metabolism; UMP biosynthesis via de novo pathway; UMP from orotate: step 2/2. Functionally, catalyzes the decarboxylation of orotidine 5'-monophosphate (OMP) to uridine 5'-monophosphate (UMP). In Caulobacter vibrioides (strain ATCC 19089 / CIP 103742 / CB 15) (Caulobacter crescentus), this protein is Orotidine 5'-phosphate decarboxylase.